A 233-amino-acid chain; its full sequence is MAKISKRINKIHEGVDRNKLYDLSAAIGLVKERAVAKFDETVEIAMNLGVDPRHADQMVRGVVNLPNGTGRTVRVAVFARGDKAEEAKKAGADIVGAEELFEIVNGGKIEFDRCIATPDMMPLVGRLGKVLGPRGMMPNPKVGTVTTDVAAAVAASKGGAVEFRVEKAGIIHAGIGKVSFDNAKLEENIKAFADAVIKAKPSAAKGEYVKRVSISSTMGVGVKVDPSTVKVVD.

This sequence belongs to the universal ribosomal protein uL1 family. Part of the 50S ribosomal subunit.

Functionally, binds directly to 23S rRNA. The L1 stalk is quite mobile in the ribosome, and is involved in E site tRNA release. Its function is as follows. Protein L1 is also a translational repressor protein, it controls the translation of the L11 operon by binding to its mRNA. This Brucella melitensis biotype 1 (strain ATCC 23456 / CCUG 17765 / NCTC 10094 / 16M) protein is Large ribosomal subunit protein uL1.